A 360-amino-acid chain; its full sequence is Glutaminyl-peptide cyclotransferase (360 aa).

The N-terminal stretch at methionine 1–cysteine 23 is a signal peptide. N-linked (GlcNAc...) asparagine glycosylation occurs at asparagine 135. Position 165 (aspartate 165) interacts with Zn(2+). Catalysis depends on glutamate 199, which acts as the Proton acceptor. Zn(2+) is bound at residue glutamate 200. Aspartate 251 (proton acceptor) is an active-site residue. Histidine 330 serves as a coordination point for Zn(2+).

This sequence belongs to the glutaminyl-peptide cyclotransferase family.

The protein localises to the secreted. The catalysed reaction is N-terminal L-glutaminyl-[peptide] = N-terminal 5-oxo-L-prolyl-[peptide] + NH4(+). Responsible for the biosynthesis of pyroglutamyl peptides. Has a bias against acidic and tryptophan residues adjacent to the N-terminal glutaminyl residue and a lack of importance of chain length after the second residue. Also catalyzes N-terminal pyroglutamate formation. The polypeptide is Glutaminyl-peptide cyclotransferase (qpct) (Dictyostelium discoideum (Social amoeba)).